We begin with the raw amino-acid sequence, 393 residues long: Protein TsgA (393 aa).

Over 1–10 the chain is Cytoplasmic; it reads MTNSNRIKLT. A helical transmembrane segment spans residues 11 to 31; sequence WISFLSYALTGALVIVTGMVM. Residues 32–50 are Periplasmic-facing; it reads GNIADYFHLPVSSMSNTFT. The chain crosses the membrane as a helical span at residues 51–71; it reads FLNAGILISIFLNAWLMEIVP. Over 72 to 77 the chain is Cytoplasmic; sequence LKTQLR. The chain crosses the membrane as a helical span at residues 78–98; the sequence is FGFILMVLAVAGLMFSHSLAL. Topologically, residues 99 to 100 are periplasmic; it reads FS. A helical transmembrane segment spans residues 101–121; it reads AAMFVLGLVSGITMSIGTFLI. The Cytoplasmic portion of the chain corresponds to 122–133; sequence TQLYEGRQRGSR. Residues 134–154 form a helical membrane-spanning segment; that stretch reads LLFTDSFFSMAGMIFPMVAAF. Residues 155–161 lie on the Periplasmic side of the membrane; the sequence is LLARSIE. A helical membrane pass occupies residues 162 to 182; the sequence is WYWVYACIGLVYLAIFILTFG. Residues 183 to 205 lie on the Cytoplasmic side of the membrane; the sequence is CEFPALGKHAQHSQAPVVKEKWG. The chain crosses the membrane as a helical span at residues 206–226; the sequence is IGVLFLAVAALCYILGQLGFI. Topologically, residues 227 to 244 are periplasmic; the sequence is SWVPEYAKGLGMSLNDAG. The chain crosses the membrane as a helical span at residues 245–265; sequence ALVSDFWMSYMFGMWAFSFIL. The Cytoplasmic portion of the chain corresponds to 266–272; that stretch reads RFFDLQR. Residues 273 to 293 traverse the membrane as a helical segment; it reads ILTVLAGMAAVLMYLFITGTQ. Over 294-297 the chain is Periplasmic; it reads AHMP. A helical transmembrane segment spans residues 298–318; it reads WFILTLGFFSSAIYTSIITLG. The Cytoplasmic segment spans residues 319–331; the sequence is SQQTKVASPKLVN. A helical membrane pass occupies residues 332–352; the sequence is FILTCGTIGTMLTFVVTGPIV. Residues 353–360 are Periplasmic-facing; it reads AHSGPQAA. Residues 361–381 form a helical membrane-spanning segment; sequence LLTANGLYAVVFVMCFALGFV. Residues 382 to 393 are Cytoplasmic-facing; it reads SRHRQHSSPAAH.

This sequence belongs to the major facilitator superfamily. TsgA family.

It is found in the cell inner membrane. This Salmonella paratyphi A (strain ATCC 9150 / SARB42) protein is Protein TsgA.